Here is a 411-residue protein sequence, read N- to C-terminus: 2,3-bisphosphoglycerate-independent phosphoglycerate mutase (411 aa).

It belongs to the BPG-independent phosphoglycerate mutase family. A-PGAM subfamily.

The catalysed reaction is (2R)-2-phosphoglycerate = (2R)-3-phosphoglycerate. The protein operates within carbohydrate degradation; glycolysis; pyruvate from D-glyceraldehyde 3-phosphate: step 3/5. Catalyzes the interconversion of 2-phosphoglycerate and 3-phosphoglycerate. This Pyrobaculum arsenaticum (strain DSM 13514 / JCM 11321 / PZ6) protein is 2,3-bisphosphoglycerate-independent phosphoglycerate mutase.